We begin with the raw amino-acid sequence, 447 residues long: Eukaryotic translation initiation factor 3 subunit E (447 aa).

Residues 253–421 (LELFFNAGYI…GTVVMNHPPS (169 aa)) enclose the PCI domain.

This sequence belongs to the eIF-3 subunit E family. Component of the eukaryotic translation initiation factor 3 (eIF-3) complex.

Its subcellular location is the cytoplasm. Functionally, component of the eukaryotic translation initiation factor 3 (eIF-3) complex, which is involved in protein synthesis of a specialized repertoire of mRNAs and, together with other initiation factors, stimulates binding of mRNA and methionyl-tRNAi to the 40S ribosome. The eIF-3 complex specifically targets and initiates translation of a subset of mRNAs involved in cell proliferation. The sequence is that of Eukaryotic translation initiation factor 3 subunit E from Chaetomium globosum (strain ATCC 6205 / CBS 148.51 / DSM 1962 / NBRC 6347 / NRRL 1970) (Soil fungus).